Reading from the N-terminus, the 301-residue chain is DNA repair protein RecO (301 aa).

The interval 272–301 is disordered; that stretch reads PTPSGQGSPVAAAAFSEEDSETLGSNLKKL.

The protein belongs to the RecO family.

Involved in DNA repair and RecF pathway recombination. This is DNA repair protein RecO from Synechococcus sp. (strain JA-3-3Ab) (Cyanobacteria bacterium Yellowstone A-Prime).